A 264-amino-acid chain; its full sequence is Thiazole synthase (264 aa).

Lys-106 functions as the Schiff-base intermediate with DXP in the catalytic mechanism. Residues Gly-167, 193 to 194, and 215 to 216 each bind 1-deoxy-D-xylulose 5-phosphate; these read AG and NS.

It belongs to the ThiG family. Homotetramer. Forms heterodimers with either ThiH or ThiS.

It is found in the cytoplasm. The catalysed reaction is [ThiS sulfur-carrier protein]-C-terminal-Gly-aminoethanethioate + 2-iminoacetate + 1-deoxy-D-xylulose 5-phosphate = [ThiS sulfur-carrier protein]-C-terminal Gly-Gly + 2-[(2R,5Z)-2-carboxy-4-methylthiazol-5(2H)-ylidene]ethyl phosphate + 2 H2O + H(+). Its pathway is cofactor biosynthesis; thiamine diphosphate biosynthesis. Functionally, catalyzes the rearrangement of 1-deoxy-D-xylulose 5-phosphate (DXP) to produce the thiazole phosphate moiety of thiamine. Sulfur is provided by the thiocarboxylate moiety of the carrier protein ThiS. In vitro, sulfur can be provided by H(2)S. The sequence is that of Thiazole synthase from Pseudomonas putida (strain W619).